Here is a 473-residue protein sequence, read N- to C-terminus: Uronate isomerase (473 aa).

This sequence belongs to the metallo-dependent hydrolases superfamily. Uronate isomerase family.

The enzyme catalyses D-glucuronate = D-fructuronate. The catalysed reaction is aldehydo-D-galacturonate = keto-D-tagaturonate. It functions in the pathway carbohydrate metabolism; pentose and glucuronate interconversion. In Bacillus licheniformis (strain ATCC 14580 / DSM 13 / JCM 2505 / CCUG 7422 / NBRC 12200 / NCIMB 9375 / NCTC 10341 / NRRL NRS-1264 / Gibson 46), this protein is Uronate isomerase.